The chain runs to 519 residues: C-glycoside 3-oxidase (519 aa).

Position 41 (E41) interacts with FAD. The interval 43–93 is disordered; sequence GPTVSNPPGAHVKNIEDPERRSHAQRASEGPGAGAETVNSPGAVKSGERRA. A compositionally biased stretch (basic and acidic residues) spans 55 to 64; it reads KNIEDPERRS. Residues S118, N120, M124, T129, A131, and V234 each coordinate FAD. The active-site Proton acceptor is the H440. FAD is bound by residues N474 and T486.

It belongs to the GMC oxidoreductase family. In terms of assembly, monomer. FAD serves as cofactor.

It carries out the reaction isovitexin + O2 = 3''-dehydroisovitexin + H2O2. It catalyses the reaction isoorientin + O2 = 3''-dehydroisoorientin + H2O2. The enzyme catalyses mangiferin + O2 = 3'-dehydromangiferin + H2O2. In terms of biological role, FAD-dependent C-glycoside-metabolizing enzyme that participates in the degradation of certain C-glycosides by catalyzing the oxidation of the hydroxyl group at the C3 position of the sugar moiety. Shows oxidase activity toward various C-glycosides such as isovitexin, isoorientin and mangiferin but cannot use carminic acid, puerarin, orientin or aloesin. Shows weak activity (100 to 1000-fold lower) with O-glycosides. Probably plays a crucial role in the metabolism of C-glycosides in nature. The protein is C-glycoside 3-oxidase of Arthrobacter globiformis (strain ATCC 8010 / DSM 20124 / JCM 1332 / NBRC 12137 / NCIMB 8907 / NRRL B-2979 / 168).